The chain runs to 108 residues: uncharacterized protein (108 aa).

2 stretches are compositionally biased toward basic and acidic residues: residues 1 to 15 (MSEA…EVLV) and 53 to 69 (KLKD…RNSE). Residues 1-77 (MSEAKDNGSR…SELDQDEEDK (77 aa)) are disordered.

This is an uncharacterized protein from Homo sapiens (Human).